Reading from the N-terminus, the 490-residue chain is GTPase Der (490 aa).

EngA-type G domains are found at residues 3 to 166 (PVVA…MEDL) and 203 to 376 (IKLA…DSST). Residues 9-16 (GRPNVGKS), 56-60 (DTGGI), 118-121 (NKTD), 209-216 (GRPNVGKS), 256-260 (DTAGV), and 321-324 (NKWD) contribute to the GTP site. Residues 377-461 (RRVGTSMLTR…PIRIQFKEGE (85 aa)) enclose the KH-like domain.

The protein belongs to the TRAFAC class TrmE-Era-EngA-EngB-Septin-like GTPase superfamily. EngA (Der) GTPase family. In terms of assembly, associates with the 50S ribosomal subunit.

Its function is as follows. GTPase that plays an essential role in the late steps of ribosome biogenesis. In Escherichia coli O157:H7, this protein is GTPase Der.